Here is a 397-residue protein sequence, read N- to C-terminus: Odorant receptor 59a (397 aa).

Topologically, residues 1 to 36 are cytoplasmic; that stretch reads MAEVRVDSLEFFKSHWTAWRYLGVAHFRVENWKNLY. Residues 37-57 form a helical membrane-spanning segment; that stretch reads VFYSIVSNLLVTLCYPVHLGI. Over 58 to 68 the chain is Extracellular; it reads SLFRNRTITED. N-linked (GlcNAc...) asparagine glycosylation is present at N62. The helical transmembrane segment at 69-92 threads the bilayer; sequence ILNLTTFATCTACSVKCLLYAYNI. Residues 93-128 lie on the Cytoplasmic side of the membrane; it reads KDVLEMERLLRLLDERVVGPEQRSIYGQVRVQLRNV. A helical membrane pass occupies residues 129–149; that stretch reads LYVFIGIYMPCALFAELSFLF. Residues 150 to 179 lie on the Extracellular side of the membrane; that stretch reads KEERGLMYPAWFPFDWLHSTRNYYIANAYQ. The helical transmembrane segment at 180 to 200 threads the bilayer; that stretch reads IVGISFQLLQNYVSDCFPAVV. The Cytoplasmic segment spans residues 201-274; it reads LCLISSHIKM…IEAFISLPML (74 aa). Residues 275–295 traverse the membrane as a helical segment; it reads IQFTVTALNVCIGLAALVFFV. Over 296 to 301 the chain is Extracellular; it reads SEPMAR. The chain crosses the membrane as a helical span at residues 302 to 322; sequence MYFIFYSLAMPLQIFPSCFFG. The Cytoplasmic segment spans residues 323 to 372; it reads TDNEYWFGRLHYAAFSCNWHTQNRSFKRKMMLFVEQSLKKSTAVAGGMMR. Residues 373–393 traverse the membrane as a helical segment; that stretch reads IHLDTFFSTLKGAYSLFTIII. Topologically, residues 394 to 397 are extracellular; sequence RMRK.

This sequence belongs to the insect chemoreceptor superfamily. Heteromeric odorant receptor channel (TC 1.A.69) family. Or2a subfamily. As to quaternary structure, interacts with Orco. Complexes exist early in the endomembrane system in olfactory sensory neurons (OSNs), coupling these complexes to the conserved ciliary trafficking pathway. In terms of tissue distribution, expressed in neurons of the third antennal segment.

It localises to the cell membrane. Its function is as follows. Odorant receptor which mediates acceptance or avoidance behavior, depending on its substrates. The odorant receptor repertoire encodes a large collection of odor stimuli that vary widely in identity, intensity, and duration. May form a complex with Orco to form odorant-sensing units, providing sensitive and prolonged odorant signaling and calcium permeability. Involved in the behavioral responses to ethyl acetate, anisole, hexanoic acid, and pyrazines. In Drosophila melanogaster (Fruit fly), this protein is Odorant receptor 59a (Or59a).